A 310-amino-acid chain; its full sequence is Receptor homology region, transmembrane domain- and RING domain-containing protein 1 (310 aa).

Residues 1 to 25 form the signal peptide; it reads MRLVVSSCLLVAAPFLSSLLRVSLA. Residues 26-168 lie on the Lumenal side of the membrane; sequence TVVLNSISAS…NPPDRGSAWT (143 aa). An intrachain disulfide couples Cys-65 to Cys-92. N-linked (GlcNAc...) asparagine glycosylation occurs at Asn-75. Positions 81 to 149 constitute a PA domain; that stretch reads TTKFALIIRG…VAGEILRKYA (69 aa). Residues 169 to 189 form a helical membrane-spanning segment; the sequence is VLAISFFSLLLIVTFLLIAFF. Topologically, residues 190 to 310 are cytoplasmic; that stretch reads APRHWTQWRG…FAFAQSSQSR (121 aa). The segment at 232 to 274 adopts an RING-type; atypical zinc-finger fold; it reads CAICLEDYRFGESLRLLPCQHAFHLNCIDSWLTKWGTSCPVCK. Residues 284 to 293 are compositionally biased toward basic and acidic residues; sequence SEVHKRESPR. The interval 284-310 is disordered; it reads SEVHKRESPRTDTSTSRFAFAQSSQSR. The span at 294–310 shows a compositional bias: polar residues; the sequence is TDTSTSRFAFAQSSQSR.

Expressed in leaves, stems, flowers and siliques.

It is found in the prevacuolar compartment membrane. The protein resides in the protein storage vacuole membrane. It localises to the golgi apparatus membrane. Functionally, involved in the trafficking of vacuolar proteins. Functions probably as a sorting receptor for protein trafficking to the protein storage vacuole (PSV) by binding the C-terminal vacuolar sorting determinant (VSD) of vacuolar-sorted proteins. The protein is Receptor homology region, transmembrane domain- and RING domain-containing protein 1 (RMR1) of Arabidopsis thaliana (Mouse-ear cress).